A 360-amino-acid chain; its full sequence is NAD(P)H-quinone oxidoreductase subunit 1, chloroplastic (360 aa).

8 helical membrane-spanning segments follow: residues 27 to 47, 98 to 118, 129 to 149, 165 to 185, 203 to 223, 253 to 273, 297 to 317, and 340 to 360; these read IWIF…VLVI, FSIG…VIPF, IGIF…LMSG, AAQS…ISLL, FWGW…ISSL, FGLF…FVTV, IFGT…FLFV, and FLLP…LFSL.

This sequence belongs to the complex I subunit 1 family. As to quaternary structure, NDH is composed of at least 16 different subunits, 5 of which are encoded in the nucleus.

The protein resides in the plastid. It localises to the chloroplast thylakoid membrane. It catalyses the reaction a plastoquinone + NADH + (n+1) H(+)(in) = a plastoquinol + NAD(+) + n H(+)(out). The enzyme catalyses a plastoquinone + NADPH + (n+1) H(+)(in) = a plastoquinol + NADP(+) + n H(+)(out). NDH shuttles electrons from NAD(P)H:plastoquinone, via FMN and iron-sulfur (Fe-S) centers, to quinones in the photosynthetic chain and possibly in a chloroplast respiratory chain. The immediate electron acceptor for the enzyme in this species is believed to be plastoquinone. Couples the redox reaction to proton translocation, and thus conserves the redox energy in a proton gradient. This is NAD(P)H-quinone oxidoreductase subunit 1, chloroplastic from Arabidopsis thaliana (Mouse-ear cress).